Reading from the N-terminus, the 143-residue chain is Large ribosomal subunit protein uL13c (143 aa).

The protein belongs to the universal ribosomal protein uL13 family. As to quaternary structure, part of the 50S ribosomal subunit.

Its subcellular location is the plastid. It localises to the chloroplast. This is Large ribosomal subunit protein uL13c from Guillardia theta (Cryptophyte).